The sequence spans 317 residues: Probable F-box protein At2g36090 (317 aa).

One can recognise an F-box domain in the interval 25 to 74; that stretch reads IESHILTRLDGATLASVSCASSHLHHLASNEILWSKICRSTWPSCSGGSR.

This Arabidopsis thaliana (Mouse-ear cress) protein is Probable F-box protein At2g36090.